The chain runs to 241 residues: Glutamate/aspartate import ATP-binding protein GltL (241 aa).

The ABC transporter domain maps to 2–236; it reads ITLKNVSKWY…PKSDRAKDFL (235 aa). 34–41 lines the ATP pocket; the sequence is GPSGSGKS.

The protein belongs to the ABC transporter superfamily. As to quaternary structure, the complex is composed of two ATP-binding proteins (GltL), two transmembrane proteins (GltJ and GltK) and a solute-binding protein (GltI).

It is found in the cell inner membrane. The catalysed reaction is a polar amino acid(out) + ATP + H2O = a polar amino acid(in) + ADP + phosphate + H(+). The enzyme catalyses L-glutamate(out) + ATP + H2O = L-glutamate(in) + ADP + phosphate + H(+). It catalyses the reaction L-aspartate(out) + ATP + H2O = L-aspartate(in) + ADP + phosphate + H(+). Functionally, part of the ABC transporter complex GltIJKL involved in glutamate and aspartate uptake. Probably responsible for energy coupling to the transport system. This chain is Glutamate/aspartate import ATP-binding protein GltL (gltL), found in Escherichia coli O157:H7.